Here is a 2296-residue protein sequence, read N- to C-terminus: Protein Ycf2 (2296 aa).

1650–1657 (GSIGIGRS) is a binding site for ATP.

The protein belongs to the Ycf2 family.

Its subcellular location is the plastid. The protein localises to the chloroplast stroma. Its function is as follows. Probable ATPase of unknown function. Its presence in a non-photosynthetic plant (Epifagus virginiana) and experiments in tobacco indicate that it has an essential function which is probably not related to photosynthesis. The protein is Protein Ycf2 of Arabis hirsuta (Hairy rock-cress).